Consider the following 307-residue polypeptide: N-acetylmuramic acid 6-phosphate etherase (307 aa).

Residues 57–220 (IIEAFKTNGR…TTASMIGVGK (164 aa)) enclose the SIS domain. The active-site Proton donor is the glutamate 85. Residue glutamate 116 is part of the active site.

It belongs to the GCKR-like family. MurNAc-6-P etherase subfamily. In terms of assembly, homodimer.

It carries out the reaction N-acetyl-D-muramate 6-phosphate + H2O = N-acetyl-D-glucosamine 6-phosphate + (R)-lactate. It participates in amino-sugar metabolism; N-acetylmuramate degradation. Specifically catalyzes the cleavage of the D-lactyl ether substituent of MurNAc 6-phosphate, producing GlcNAc 6-phosphate and D-lactate. This is N-acetylmuramic acid 6-phosphate etherase from Alkaliphilus metalliredigens (strain QYMF).